Reading from the N-terminus, the 107-residue chain is Replication initiation control protein YabA (107 aa).

4 residues coordinate Zn(2+): His-81, Cys-83, Cys-97, and Cys-100.

The protein belongs to the YabA family. As to quaternary structure, homotetramer. Interacts with both DnaA and DnaN, acting as a bridge between these two proteins. The cofactor is Zn(2+).

The protein localises to the cytoplasm. It is found in the nucleoid. In terms of biological role, involved in control of chromosome replication initiation. Inhibits the cooperative binding of DnaA to the oriC region, thus negatively regulating initiation of chromosome replication. Inhibits the ability of DnaA-ATP to form a helix on DNA; does not disassemble preformed DnaA-DNA helices. Decreases the residence time of DnaA on the chromosome at its binding sites (oriC, replication forks and promoter-binding sites). Tethers DnaA to the replication machinery via the DNA polymerase beta sliding clamp subunit (dnaN). Associates with oriC and other DnaA targets on the chromosome in a DnaA-dependent manner. The protein is Replication initiation control protein YabA of Streptococcus equi subsp. equi (strain 4047).